Consider the following 276-residue polypeptide: ATP synthase subunit a (276 aa).

6 helical membrane-spanning segments follow: residues 47 to 67 (WHID…WLFY), 107 to 127 (IAPL…MDLI), 152 to 172 (DLNV…FYSI), 188 to 208 (PFNH…TLVA), 226 to 246 (LIFI…SVPW), and 247 to 267 (AIFH…LTIV).

This sequence belongs to the ATPase A chain family. F-type ATPases have 2 components, CF(1) - the catalytic core - and CF(0) - the membrane proton channel. CF(1) has five subunits: alpha(3), beta(3), gamma(1), delta(1), epsilon(1). CF(0) has three main subunits: a(1), b(2) and c(9-12). The alpha and beta chains form an alternating ring which encloses part of the gamma chain. CF(1) is attached to CF(0) by a central stalk formed by the gamma and epsilon chains, while a peripheral stalk is formed by the delta and b chains.

Its subcellular location is the cell inner membrane. Its function is as follows. Key component of the proton channel; it plays a direct role in the translocation of protons across the membrane. This chain is ATP synthase subunit a, found in Shewanella pealeana (strain ATCC 700345 / ANG-SQ1).